We begin with the raw amino-acid sequence, 422 residues long: Tyrosine--tRNA ligase (422 aa).

An L-tyrosine-binding site is contributed by Y36. The 'HIGH' region signature appears at 41-50; that stretch reads PTADSLHIGH. The L-tyrosine site is built by Y175 and Q179. The 'KMSKS' region signature appears at 235 to 239; the sequence is KFGKT. Position 238 (K238) interacts with ATP. The region spanning 354–411 is the S4 RNA-binding domain; the sequence is TSLQEALTKSKLATSRSQARYFIKSNAITINAHKQSKIEYIFQDSDRIYNLYTLLKRG.

This sequence belongs to the class-I aminoacyl-tRNA synthetase family. TyrS type 1 subfamily. In terms of assembly, homodimer.

It is found in the cytoplasm. It carries out the reaction tRNA(Tyr) + L-tyrosine + ATP = L-tyrosyl-tRNA(Tyr) + AMP + diphosphate + H(+). Its function is as follows. Catalyzes the attachment of tyrosine to tRNA(Tyr) in a two-step reaction: tyrosine is first activated by ATP to form Tyr-AMP and then transferred to the acceptor end of tRNA(Tyr). This chain is Tyrosine--tRNA ligase, found in Blochmanniella floridana.